The following is a 62-amino-acid chain: Small ribosomal subunit protein uS14 (62 aa).

Cysteine 25, cysteine 28, cysteine 41, and cysteine 44 together coordinate Zn(2+).

The protein belongs to the universal ribosomal protein uS14 family. Zinc-binding uS14 subfamily. Part of the 30S ribosomal subunit. Contacts proteins S3 and S10. Requires Zn(2+) as cofactor.

Its function is as follows. Binds 16S rRNA, required for the assembly of 30S particles and may also be responsible for determining the conformation of the 16S rRNA at the A site. This Persephonella marina (strain DSM 14350 / EX-H1) protein is Small ribosomal subunit protein uS14.